The following is a 123-amino-acid chain: Large ribosomal subunit protein uL29 (123 aa).

The protein belongs to the universal ribosomal protein uL29 family.

This Caenorhabditis elegans protein is Large ribosomal subunit protein uL29 (rpl-35).